A 244-amino-acid chain; its full sequence is Triosephosphate isomerase (244 aa).

8–10 is a substrate binding site; the sequence is NWK. Catalysis depends on H93, which acts as the Electrophile. E161 functions as the Proton acceptor in the catalytic mechanism. Residues G167, S206, and 227 to 228 each bind substrate; that span reads GG.

It belongs to the triosephosphate isomerase family. Homodimer.

The protein localises to the cytoplasm. The catalysed reaction is D-glyceraldehyde 3-phosphate = dihydroxyacetone phosphate. Its pathway is carbohydrate biosynthesis; gluconeogenesis. It participates in carbohydrate degradation; glycolysis; D-glyceraldehyde 3-phosphate from glycerone phosphate: step 1/1. Functionally, involved in the gluconeogenesis. Catalyzes stereospecifically the conversion of dihydroxyacetone phosphate (DHAP) to D-glyceraldehyde-3-phosphate (G3P). This Deinococcus radiodurans (strain ATCC 13939 / DSM 20539 / JCM 16871 / CCUG 27074 / LMG 4051 / NBRC 15346 / NCIMB 9279 / VKM B-1422 / R1) protein is Triosephosphate isomerase.